The chain runs to 125 residues: Methylglyoxal synthase (125 aa).

Positions 1 to 125 constitute an MGS-like domain; that stretch reads MTQRLRIALI…TAEKLVRALD (125 aa). Substrate is bound by residues His-12, Lys-16, 38 to 41, and 59 to 60; these read TGTT and SG. Asp-65 (proton donor/acceptor) is an active-site residue. His-92 provides a ligand contact to substrate.

The protein belongs to the methylglyoxal synthase family.

It carries out the reaction dihydroxyacetone phosphate = methylglyoxal + phosphate. In terms of biological role, catalyzes the formation of methylglyoxal from dihydroxyacetone phosphate. This chain is Methylglyoxal synthase, found in Brucella abortus (strain S19).